A 469-amino-acid polypeptide reads, in one-letter code: IAA-alanine resistance protein 1 (469 aa).

The first 28 residues, 1–28, serve as a signal peptide directing secretion; that stretch reads MSFSLRKLLVPILVLVLFLDLCVESGFS. The interval 33–58 is disordered; it reads ARDDHVHHHGGGCSHSHDHDHDHDHD. Basic and acidic residues predominate over residues 47-58; it reads HSHDHDHDHDHD. The next 2 helical transmembrane spans lie at 114-134 and 141-161; these read CSLL…IMFV and WFVD…AFLH. Positions 170 to 197 are disordered; it reads GHSHSNDHHENHDHHDHSHSDSPSHSHS. Over residues 173–193 the composition is skewed to basic and acidic residues; sequence HSNDHHENHDHHDHSHSDSPS. The helical transmembrane segment at 201-221 threads the bilayer; sequence LSVGLSVLAGIVVFLLVEKLV. Positions 228–315 are disordered; sequence SSGSNTWGHH…GKSDKPEQVE (88 aa). The segment covering 235–246 has biased composition (basic residues); the sequence is GHHHHHHHAGSK. Over residues 247–256 the composition is skewed to basic and acidic residues; sequence KLKDEGDHNN. Positions 257–279 are enriched in polar residues; the sequence is LDQQSSSDAIVNSSEKVSGGSTD. Basic and acidic residues predominate over residues 292 to 315; sequence ATDKSDSGTEITSDGKSDKPEQVE. The next 3 membrane-spanning stretches (helical) occupy residues 387–407, 415–435, and 448–468; these read LFFN…VLVW, SLIE…GVLA, and SACH…ISLI.

Belongs to the ZIP transporter (TC 2.A.5) family. KE4/Catsup subfamily.

It localises to the membrane. In terms of biological role, may participate in auxin metabolism or response. Probable transporter. The chain is IAA-alanine resistance protein 1 (IAR1) from Arabidopsis thaliana (Mouse-ear cress).